Here is a 111-residue protein sequence, read N- to C-terminus: UPF0235 protein glr3835 (111 aa).

The protein belongs to the UPF0235 family.

The protein is UPF0235 protein glr3835 of Gloeobacter violaceus (strain ATCC 29082 / PCC 7421).